The sequence spans 203 residues: Small ribosomal subunit protein uS4 (203 aa).

Positions 1 to 46 are disordered; the sequence is MSKRQSAKYKLDRRMGENIWGRPKSPVNRREYGPGQHGQRRKGKMS. Positions 94 to 157 constitute an S4 RNA-binding domain; sequence RRLDAVVYRA…QEMALVAEAQ (64 aa).

It belongs to the universal ribosomal protein uS4 family. In terms of assembly, part of the 30S ribosomal subunit. Contacts protein S5. The interaction surface between S4 and S5 is involved in control of translational fidelity.

Functionally, one of the primary rRNA binding proteins, it binds directly to 16S rRNA where it nucleates assembly of the body of the 30S subunit. Its function is as follows. With S5 and S12 plays an important role in translational accuracy. The protein is Small ribosomal subunit protein uS4 of Sphingopyxis alaskensis (strain DSM 13593 / LMG 18877 / RB2256) (Sphingomonas alaskensis).